We begin with the raw amino-acid sequence, 259 residues long: ATP synthase subunit a (259 aa).

The next 5 membrane-spanning stretches (helical) occupy residues 29-49 (TVNI…IWLF), 89-109 (LIAP…AMDL), 132-154 (SADV…FYSI), 209-229 (IFIL…NVPW), and 230-250 (AIFH…LTIV).

This sequence belongs to the ATPase A chain family. As to quaternary structure, F-type ATPases have 2 components, CF(1) - the catalytic core - and CF(0) - the membrane proton channel. CF(1) has five subunits: alpha(3), beta(3), gamma(1), delta(1), epsilon(1). CF(0) has three main subunits: a(1), b(2) and c(9-12). The alpha and beta chains form an alternating ring which encloses part of the gamma chain. CF(1) is attached to CF(0) by a central stalk formed by the gamma and epsilon chains, while a peripheral stalk is formed by the delta and b chains.

Its subcellular location is the cell inner membrane. In terms of biological role, key component of the proton channel; it plays a direct role in the translocation of protons across the membrane. The sequence is that of ATP synthase subunit a from Tolumonas auensis (strain DSM 9187 / NBRC 110442 / TA 4).